Reading from the N-terminus, the 450-residue chain is 5-amino-6-(D-ribitylamino)uracil--L-tyrosine 4-hydroxyphenyl transferase (450 aa).

Residues 1-24 (MPDVPETVGTPDGSTEFEHRPTTD) form a disordered region. The Radical SAM core domain maps to 82-350 (VTFVANLNNN…MIAVSRLFLD (269 aa)). The [4Fe-4S] cluster site is built by Cys-96, Cys-100, and Cys-103. Residues 430 to 450 (PDADVLGPQLGPRADGTPLLD) are disordered.

This sequence belongs to the radical SAM superfamily. CofH family. In terms of assembly, consists of two subunits, CofG and CofH. The cofactor is [4Fe-4S] cluster.

It carries out the reaction 5-amino-6-(D-ribitylamino)uracil + L-tyrosine + S-adenosyl-L-methionine = 5-amino-5-(4-hydroxybenzyl)-6-(D-ribitylimino)-5,6-dihydrouracil + 2-iminoacetate + 5'-deoxyadenosine + L-methionine + H(+). It functions in the pathway cofactor biosynthesis; coenzyme F0 biosynthesis. In terms of biological role, catalyzes the radical-mediated synthesis of 5-amino-5-(4-hydroxybenzyl)-6-(D-ribitylimino)-5,6-dihydrouracil from 5-amino-6-(D-ribitylamino)uracil and L-tyrosine. This is 5-amino-6-(D-ribitylamino)uracil--L-tyrosine 4-hydroxyphenyl transferase from Haloarcula marismortui (strain ATCC 43049 / DSM 3752 / JCM 8966 / VKM B-1809) (Halobacterium marismortui).